The chain runs to 214 residues: Ribosomal RNA small subunit methyltransferase G (214 aa).

S-adenosyl-L-methionine contacts are provided by residues Gly81, Met86, 132 to 133 (VE), and Arg147.

This sequence belongs to the methyltransferase superfamily. RNA methyltransferase RsmG family.

The protein localises to the cytoplasm. The enzyme catalyses guanosine(527) in 16S rRNA + S-adenosyl-L-methionine = N(7)-methylguanosine(527) in 16S rRNA + S-adenosyl-L-homocysteine. Its function is as follows. Specifically methylates the N7 position of guanine in position 527 of 16S rRNA. This chain is Ribosomal RNA small subunit methyltransferase G, found in Pseudomonas aeruginosa (strain UCBPP-PA14).